The following is a 226-amino-acid chain: 3-dehydroquinate dehydratase (226 aa).

Residues 33-35 (EWR) and Arg-65 each bind 3-dehydroquinate. Residue His-121 is the Proton donor/acceptor of the active site. The Schiff-base intermediate with substrate role is filled by Lys-146. Arg-188, Ser-207, and Gln-211 together coordinate 3-dehydroquinate.

The protein belongs to the type-I 3-dehydroquinase family. As to quaternary structure, homodimer.

It carries out the reaction 3-dehydroquinate = 3-dehydroshikimate + H2O. It functions in the pathway metabolic intermediate biosynthesis; chorismate biosynthesis; chorismate from D-erythrose 4-phosphate and phosphoenolpyruvate: step 3/7. Functionally, involved in the third step of the chorismate pathway, which leads to the biosynthesis of aromatic amino acids. Catalyzes the cis-dehydration of 3-dehydroquinate (DHQ) and introduces the first double bond of the aromatic ring to yield 3-dehydroshikimate. The protein is 3-dehydroquinate dehydratase of Lactococcus lactis subsp. lactis (strain IL1403) (Streptococcus lactis).